Consider the following 156-residue polypeptide: Oleosin Zm-I (156 aa).

The tract at residues 1–30 (MADHHRGATGGGGGYGDLQRGGGMHGEAQQ) is disordered. Ala2 carries the post-translational modification N-acetylalanine. Residues 2–42 (ADHHRGATGGGGGYGDLQRGGGMHGEAQQQQKQGAMMTALK) form a polar region. The span at 8–25 (ATGGGGGYGDLQRGGGMH) shows a compositional bias: gly residues. The tract at residues 43–114 (AATAATFGGS…AALSVFSWMY (72 aa)) is hydrophobic. 2 helical membrane-spanning segments follow: residues 51–71 (GSMLVLSGLILAGTVIALTVA) and 95–115 (GFVTSGGLGVAALSVFSWMYK).

The protein belongs to the oleosin family. The N-terminus is blocked.

The protein resides in the lipid droplet. The protein localises to the membrane. May have a structural role to stabilize the lipid body during desiccation of the seed by preventing coalescence of the oil. Probably interacts with both lipid and phospholipid moieties of lipid bodies. May also provide recognition signals for specific lipase anchorage in lipolysis during seedling growth. In Zea mays (Maize), this protein is Oleosin Zm-I (OLE16).